We begin with the raw amino-acid sequence, 332 residues long: D-lactate dehydrogenase (332 aa).

NAD(+) contacts are provided by residues 155 to 156, Asp-175, 206 to 207, Asn-212, 233 to 235, and Asp-259; these read RI, VP, and FAR. Residue Arg-235 is part of the active site. The active site involves Glu-264. The active-site Proton donor is His-296.

The protein belongs to the D-isomer specific 2-hydroxyacid dehydrogenase family.

The catalysed reaction is (R)-lactate + NAD(+) = pyruvate + NADH + H(+). The sequence is that of D-lactate dehydrogenase (ldhD) from Lactiplantibacillus plantarum (strain ATCC BAA-793 / NCIMB 8826 / WCFS1) (Lactobacillus plantarum).